The primary structure comprises 97 residues: Small ribosomal subunit protein bS20c (97 aa).

The span at 1–15 shows a compositional bias: polar residues; the sequence is MSKNVSAIKKNQVSL. The segment at 1-20 is disordered; the sequence is MSKNVSAIKKNQVSLRNKRK.

The protein belongs to the bacterial ribosomal protein bS20 family.

It localises to the plastid. The protein resides in the chloroplast. In terms of biological role, binds directly to 16S ribosomal RNA. This chain is Small ribosomal subunit protein bS20c, found in Gracilaria tenuistipitata var. liui (Red alga).